The chain runs to 736 residues: Catalase-peroxidase (736 aa).

The disordered stretch occupies residues 1 to 21 (MSNEQKCPFSGTHGARTTVGT). Residues 96–224 (WHSAGTYRTG…LAAVQMGLIY (129 aa)) constitute a cross-link (tryptophyl-tyrosyl-methioninium (Trp-Tyr) (with M-250)). His97 acts as the Proton acceptor in catalysis. A cross-link (tryptophyl-tyrosyl-methioninium (Tyr-Met) (with W-96)) is located at residues 224–250 (YVNPEGPDGNPDPVASGRDIRETFARM). His265 is a heme b binding site.

Belongs to the peroxidase family. Peroxidase/catalase subfamily. As to quaternary structure, homodimer or homotetramer. Heme b is required as a cofactor. In terms of processing, formation of the three residue Trp-Tyr-Met cross-link is important for the catalase, but not the peroxidase activity of the enzyme.

It catalyses the reaction H2O2 + AH2 = A + 2 H2O. The catalysed reaction is 2 H2O2 = O2 + 2 H2O. Bifunctional enzyme with both catalase and broad-spectrum peroxidase activity. This chain is Catalase-peroxidase, found in Dechloromonas aromatica (strain RCB).